The sequence spans 396 residues: Pre-mRNA-splicing regulator WTAP (396 aa).

An N-acetylmethionine modification is found at Met1. Ser14 carries the post-translational modification Phosphoserine. Low complexity-rich tracts occupy residues 240–257, 278–291, and 304–316; these read QQQQ…TTAS, SNGS…SGSG, and PSSP…SSNS. A disordered region spans residues 240–396; that stretch reads QQQQSQASAP…SSVNVQGSVL (157 aa). Ser305, Ser306, and Ser341 each carry phosphoserine. A compositionally biased stretch (polar residues) spans 340 to 356; sequence DSPTGSENSLTHQSNDT. Thr350 carries the post-translational modification Phosphothreonine. The span at 357–368 shows a compositional bias: basic and acidic residues; sequence DSSHDPQEEKAV. Residues 380-396 show a composition bias toward polar residues; sequence HVQNGLDSSVNVQGSVL. Residue Ser388 is modified to Phosphoserine.

This sequence belongs to the fl(2)d family. In terms of assembly, component of the WMM complex, a N6-methyltransferase complex composed of a catalytic subcomplex, named MAC, and of an associated subcomplex, named MACOM. The MAC subcomplex is composed of METTL3 and METTL14. The MACOM subcomplex is composed of WTAP, ZC3H13, CBLL1/HAKAI, VIRMA, and, in some cases of RBM15 (RBM15 or RBM15B). Interacts with WT1. Also a component of a MACOM-like complex, named WTAP complex, composed of WTAP, ZC3H13, CBLL1, VIRMA, RBM15, BCLAF1 and THRAP3. In terms of tissue distribution, ubiquitously expressed.

The protein localises to the nucleus speckle. It localises to the nucleus. The protein resides in the nucleoplasm. Its subcellular location is the cytoplasm. Associated component of the WMM complex, a complex that mediates N6-methyladenosine (m6A) methylation of RNAs, a modification that plays a role in the efficiency of mRNA splicing and RNA processing. Required for accumulation of METTL3 and METTL14 to nuclear speckle. Acts as a mRNA splicing regulator. Regulates G2/M cell-cycle transition by binding to the 3' UTR of CCNA2, which enhances its stability. Impairs WT1 DNA-binding ability and inhibits expression of WT1 target genes. This is Pre-mRNA-splicing regulator WTAP from Homo sapiens (Human).